The following is a 443-amino-acid chain: ATP-dependent protease ATPase subunit HslU (443 aa).

ATP contacts are provided by residues isoleucine 18 and glycine 60–glutamate 65. The tract at residues proline 138–phenylalanine 158 is disordered. Positions tryptophan 143–threonine 154 are enriched in basic and acidic residues. Residues aspartate 255, glutamate 321, and arginine 393 each contribute to the ATP site.

It belongs to the ClpX chaperone family. HslU subfamily. As to quaternary structure, a double ring-shaped homohexamer of HslV is capped on each side by a ring-shaped HslU homohexamer. The assembly of the HslU/HslV complex is dependent on binding of ATP.

Its subcellular location is the cytoplasm. Its function is as follows. ATPase subunit of a proteasome-like degradation complex; this subunit has chaperone activity. The binding of ATP and its subsequent hydrolysis by HslU are essential for unfolding of protein substrates subsequently hydrolyzed by HslV. HslU recognizes the N-terminal part of its protein substrates and unfolds these before they are guided to HslV for hydrolysis. This is ATP-dependent protease ATPase subunit HslU from Pseudoalteromonas atlantica (strain T6c / ATCC BAA-1087).